A 367-amino-acid polypeptide reads, in one-letter code: 3-dehydroquinate synthase (367 aa).

Residues 112 to 116 (GVIGD), 136 to 137 (TT), lysine 149, lysine 158, and 176 to 179 (TLKT) contribute to the NAD(+) site. Zn(2+)-binding residues include glutamate 191, histidine 256, and histidine 273.

It belongs to the sugar phosphate cyclases superfamily. Dehydroquinate synthase family. NAD(+) serves as cofactor. Co(2+) is required as a cofactor. It depends on Zn(2+) as a cofactor.

It is found in the cytoplasm. The enzyme catalyses 7-phospho-2-dehydro-3-deoxy-D-arabino-heptonate = 3-dehydroquinate + phosphate. The protein operates within metabolic intermediate biosynthesis; chorismate biosynthesis; chorismate from D-erythrose 4-phosphate and phosphoenolpyruvate: step 2/7. Catalyzes the conversion of 3-deoxy-D-arabino-heptulosonate 7-phosphate (DAHP) to dehydroquinate (DHQ). This Prochlorococcus marinus (strain SARG / CCMP1375 / SS120) protein is 3-dehydroquinate synthase.